Here is a 179-residue protein sequence, read N- to C-terminus: UPF0316 protein Ping_1367 (179 aa).

The next 2 membrane-spanning stretches (helical) occupy residues 28–48 and 55–75; these read FLAS…SAQV and WYLA…GISI.

Belongs to the UPF0316 family.

It is found in the cell membrane. In Psychromonas ingrahamii (strain DSM 17664 / CCUG 51855 / 37), this protein is UPF0316 protein Ping_1367.